The chain runs to 285 residues: Pantothenate synthetase (285 aa).

Residue 30–37 (MGFLHEGH) coordinates ATP. His37 serves as the catalytic Proton donor. Gln61 is a (R)-pantoate binding site. Beta-alanine is bound at residue Gln61. 147–150 (GQKD) lines the ATP pocket. Gln153 is a binding site for (R)-pantoate. Residues Val176 and 184-187 (KSSR) contribute to the ATP site.

The protein belongs to the pantothenate synthetase family. In terms of assembly, homodimer.

Its subcellular location is the cytoplasm. It catalyses the reaction (R)-pantoate + beta-alanine + ATP = (R)-pantothenate + AMP + diphosphate + H(+). The protein operates within cofactor biosynthesis; (R)-pantothenate biosynthesis; (R)-pantothenate from (R)-pantoate and beta-alanine: step 1/1. Catalyzes the condensation of pantoate with beta-alanine in an ATP-dependent reaction via a pantoyl-adenylate intermediate. The chain is Pantothenate synthetase from Listeria welshimeri serovar 6b (strain ATCC 35897 / DSM 20650 / CCUG 15529 / CIP 8149 / NCTC 11857 / SLCC 5334 / V8).